The sequence spans 430 residues: Adenylosuccinate synthetase (430 aa).

Residues 12-18 and 40-42 each bind GTP; these read GDEGKGK and GHT. Residue Asp13 is the Proton acceptor of the active site. Asp13 and Gly40 together coordinate Mg(2+). Residues 13-16, 38-41, Thr128, Arg142, Gln223, Thr238, and Arg302 contribute to the IMP site; these read DEGK and NAGH. The active-site Proton donor is His41. 298–304 contributes to the substrate binding site; it reads TTTGRPR. GTP-binding positions include Arg304, 330-332, and 412-414; these read SID and SVG.

Belongs to the adenylosuccinate synthetase family. In terms of assembly, homodimer. The cofactor is Mg(2+).

The protein resides in the cytoplasm. It carries out the reaction IMP + L-aspartate + GTP = N(6)-(1,2-dicarboxyethyl)-AMP + GDP + phosphate + 2 H(+). The protein operates within purine metabolism; AMP biosynthesis via de novo pathway; AMP from IMP: step 1/2. Functionally, plays an important role in the de novo pathway of purine nucleotide biosynthesis. Catalyzes the first committed step in the biosynthesis of AMP from IMP. This Exiguobacterium sibiricum (strain DSM 17290 / CCUG 55495 / CIP 109462 / JCM 13490 / 255-15) protein is Adenylosuccinate synthetase.